The primary structure comprises 72 residues: Lantibiotic Flvbeta.e (72 aa).

Positions 1–34 (MNNKEFNMEQFKKLAAVVSEDELDEMLDENVTGA) are cleaved as a propeptide — cleaved by FlvT. Positions 36-40 (SSIPC) form a cross-link, lanthionine (Ser-Cys); by FlvM2. Position 37 is a 2,3-didehydroalanine (Ser); by FlvM2 (Ser37). 2,3-didehydrobutyrine; by FlvM2 is present on residues Thr48 and Thr49. 3 consecutive cross-links (beta-methyllanthionine (Thr-Cys); by FlvM2) follow at residues 55–61 (TTGFDWC), 63–66 (TGAC), and 67–70 (TTSC).

Post-translationally, contains LL-lanthionine and DL-beta-methyllanthionine, when coepressed in E.coli with the flavecin synthetase FlvM2.

The protein resides in the secreted. Functionally, lanthionine-containing peptide antibiotic (lantibiotic) that is probably active on Gram-positive bacteria, since its analog [Del1]Flvbeta.e shows antibacterial activity against Gram-positive bacteria. This activity is not synergistically enhanced by [Del2]Flvalpha.a, an analog of Flvalpha.a, which is encoded by the same operon than Flvbeta.e. The bactericidal activity of lantibiotics is based on depolarization of energized bacterial cytoplasmic membranes, initiated by the formation of aqueous transmembrane pores. The polypeptide is Lantibiotic Flvbeta.e (Ruminococcus flavefaciens).